A 334-amino-acid polypeptide reads, in one-letter code: PDZ domain-containing protein MAGIX (334 aa).

Composition is skewed to basic and acidic residues over residues 1-13 (MEPR…DPRG) and 209-224 (LETH…EPRK). Disordered regions lie at residues 1–26 (MEPR…LAGP) and 209–306 (LETH…WLVP). In terms of domain architecture, PDZ spans 125 to 209 (SVELVRGYAG…QLHLVIRRPL (85 aa)). The segment covering 244–260 (GSRSSSTSLVQHPPSRT) has biased composition (polar residues). S272 bears the Phosphoserine mark.

The sequence is that of PDZ domain-containing protein MAGIX (MAGIX) from Homo sapiens (Human).